A 106-amino-acid chain; its full sequence is MIVTTTPSIEGKKIVDYKGIVSSEVIVGVNLVKDFIASITDIFGGRSGTYENELIRAREEALQELQNRAAMLGANAVVGIDIDYEVLGTNGSMLMVSVTGTAVVVE.

It belongs to the UPF0145 family.

This Caldicellulosiruptor saccharolyticus (strain ATCC 43494 / DSM 8903 / Tp8T 6331) protein is UPF0145 protein Csac_0771.